We begin with the raw amino-acid sequence, 604 residues long: Elongation factor 4 (604 aa).

Positions 10–191 (KNIRNFSIIA…KIITTIPAPS (182 aa)) constitute a tr-type G domain. Residues 22–27 (DHGKST) and 138–141 (NKID) contribute to the GTP site.

It belongs to the TRAFAC class translation factor GTPase superfamily. Classic translation factor GTPase family. LepA subfamily.

It is found in the cell inner membrane. It catalyses the reaction GTP + H2O = GDP + phosphate + H(+). Its function is as follows. Required for accurate and efficient protein synthesis under certain stress conditions. May act as a fidelity factor of the translation reaction, by catalyzing a one-codon backward translocation of tRNAs on improperly translocated ribosomes. Back-translocation proceeds from a post-translocation (POST) complex to a pre-translocation (PRE) complex, thus giving elongation factor G a second chance to translocate the tRNAs correctly. Binds to ribosomes in a GTP-dependent manner. This chain is Elongation factor 4, found in Helicobacter acinonychis (strain Sheeba).